The primary structure comprises 572 residues: DNA mismatch repair protein MutL (572 aa).

It belongs to the DNA mismatch repair MutL/HexB family.

Functionally, this protein is involved in the repair of mismatches in DNA. It is required for dam-dependent methyl-directed DNA mismatch repair. May act as a 'molecular matchmaker', a protein that promotes the formation of a stable complex between two or more DNA-binding proteins in an ATP-dependent manner without itself being part of a final effector complex. The sequence is that of DNA mismatch repair protein MutL from Dictyoglomus turgidum (strain DSM 6724 / Z-1310).